The sequence spans 267 residues: Imidazole glycerol phosphate synthase subunit HisF (267 aa).

Active-site residues include Asp-22 and Asp-141.

This sequence belongs to the HisA/HisF family. As to quaternary structure, heterodimer of HisH and HisF.

Its subcellular location is the cytoplasm. The catalysed reaction is 5-[(5-phospho-1-deoxy-D-ribulos-1-ylimino)methylamino]-1-(5-phospho-beta-D-ribosyl)imidazole-4-carboxamide + L-glutamine = D-erythro-1-(imidazol-4-yl)glycerol 3-phosphate + 5-amino-1-(5-phospho-beta-D-ribosyl)imidazole-4-carboxamide + L-glutamate + H(+). It participates in amino-acid biosynthesis; L-histidine biosynthesis; L-histidine from 5-phospho-alpha-D-ribose 1-diphosphate: step 5/9. Functionally, IGPS catalyzes the conversion of PRFAR and glutamine to IGP, AICAR and glutamate. The HisF subunit catalyzes the cyclization activity that produces IGP and AICAR from PRFAR using the ammonia provided by the HisH subunit. The chain is Imidazole glycerol phosphate synthase subunit HisF from Mycobacterium bovis (strain ATCC BAA-935 / AF2122/97).